Here is a 122-residue protein sequence, read N- to C-terminus: MIQSQTHLNVADNSGARTIMCIRIIGSSNRRYAHIGDIIVAVIKDAVPNMTLEKSEVVRAVIVRTRKELKRDNGIILRYDDNAAVIIDKEGNPKGTRIFGAIPRELRKLNFNKIVSLAPEVL.

This sequence belongs to the universal ribosomal protein uL14 family. As to quaternary structure, part of the 50S ribosomal subunit.

Its subcellular location is the plastid. In terms of biological role, binds to 23S rRNA. The polypeptide is Large ribosomal subunit protein uL14c (Cuscuta obtusiflora (Peruvian dodder)).